Reading from the N-terminus, the 310-residue chain is Proline iminopeptidase (310 aa).

The 258-residue stretch at 33 to 290 (PVIFLHGGPG…RVVQAGHCAF (258 aa)) folds into the AB hydrolase-1 domain. Catalysis depends on Ser-107, which acts as the Nucleophile. Asp-260 is a catalytic residue. His-287 serves as the catalytic Proton donor.

The protein belongs to the peptidase S33 family.

It is found in the cytoplasm. The enzyme catalyses Release of N-terminal proline from a peptide.. In terms of biological role, hydrolyzes peptides having the structure Pro-Y-Z to yield free proline. Also hydrolyzes the dipeptide Pro-Gly. This Neisseria gonorrhoeae protein is Proline iminopeptidase (pip).